The primary structure comprises 678 residues: UvrABC system protein C (678 aa).

The GIY-YIG domain occupies 16–95 (VEPGVYRFRD…IKEFDPRFNI (80 aa)). Residues 208–243 (DRLIREMEQQMNAAAEELDFERAARLRDNIGAMRRA) enclose the UVR domain. The interval 477–508 (HLRDAEAAPEGRPEQGPRASARPEQGPRASAR) is disordered. The segment covering 479-491 (RDAEAAPEGRPEQ) has biased composition (basic and acidic residues).

The protein belongs to the UvrC family. In terms of assembly, interacts with UvrB in an incision complex.

Its subcellular location is the cytoplasm. Functionally, the UvrABC repair system catalyzes the recognition and processing of DNA lesions. UvrC both incises the 5' and 3' sides of the lesion. The N-terminal half is responsible for the 3' incision and the C-terminal half is responsible for the 5' incision. The sequence is that of UvrABC system protein C from Mycolicibacterium vanbaalenii (strain DSM 7251 / JCM 13017 / BCRC 16820 / KCTC 9966 / NRRL B-24157 / PYR-1) (Mycobacterium vanbaalenii).